The chain runs to 91 residues: Acyl carrier protein (91 aa).

Residues 4–79 (QQILDKVQSI…QAVDYILQHK (76 aa)) form the Carrier domain. The residue at position 39 (Ser39) is an O-(pantetheine 4'-phosphoryl)serine.

It belongs to the acyl carrier protein (ACP) family. Post-translationally, 4'-phosphopantetheine is transferred from CoA to a specific serine of apo-ACP by AcpS. This modification is essential for activity because fatty acids are bound in thioester linkage to the sulfhydryl of the prosthetic group.

The protein localises to the plastid. Its subcellular location is the chloroplast. Its pathway is lipid metabolism; fatty acid biosynthesis. Carrier of the growing fatty acid chain in fatty acid biosynthesis. The chain is Acyl carrier protein from Cyanidioschyzon merolae (strain NIES-3377 / 10D) (Unicellular red alga).